Here is a 301-residue protein sequence, read N- to C-terminus: Acetylglutamate kinase (301 aa).

Residues 68–69 (GG), Arg-90, and Asn-195 contribute to the substrate site.

Belongs to the acetylglutamate kinase family. ArgB subfamily.

The protein resides in the cytoplasm. It catalyses the reaction N-acetyl-L-glutamate + ATP = N-acetyl-L-glutamyl 5-phosphate + ADP. The protein operates within amino-acid biosynthesis; L-arginine biosynthesis; N(2)-acetyl-L-ornithine from L-glutamate: step 2/4. Functionally, catalyzes the ATP-dependent phosphorylation of N-acetyl-L-glutamate. The protein is Acetylglutamate kinase of Pseudomonas putida (strain W619).